Reading from the N-terminus, the 228-residue chain is Sugar fermentation stimulation protein homolog (228 aa).

The protein belongs to the SfsA family.

The sequence is that of Sugar fermentation stimulation protein homolog from Desulfitobacterium hafniense (strain Y51).